A 76-amino-acid polypeptide reads, in one-letter code: UPF0248 protein MmarC6_0667 (76 aa).

Belongs to the UPF0248 family.

The chain is UPF0248 protein MmarC6_0667 from Methanococcus maripaludis (strain C6 / ATCC BAA-1332).